Reading from the N-terminus, the 222-residue chain is Probable pyridoxal 5'-phosphate synthase subunit SNO2 (222 aa).

An L-glutamine-binding site is contributed by 58-60 (GES). The Nucleophile role is filled by C91. Residues R120 and 151–152 (IR) each bind L-glutamine. Catalysis depends on charge relay system residues H197 and E199.

The protein belongs to the glutaminase PdxT/SNO family.

The catalysed reaction is aldehydo-D-ribose 5-phosphate + D-glyceraldehyde 3-phosphate + L-glutamine = pyridoxal 5'-phosphate + L-glutamate + phosphate + 3 H2O + H(+). It carries out the reaction L-glutamine + H2O = L-glutamate + NH4(+). It functions in the pathway cofactor biosynthesis; pyridoxal 5'-phosphate biosynthesis. Functionally, catalyzes the hydrolysis of glutamine to glutamate and ammonia as part of the biosynthesis of pyridoxal 5'-phosphate. The resulting ammonia molecule is channeled to the active site of a SNZ isoform. The polypeptide is Probable pyridoxal 5'-phosphate synthase subunit SNO2 (SNO2) (Saccharomyces cerevisiae (strain ATCC 204508 / S288c) (Baker's yeast)).